We begin with the raw amino-acid sequence, 772 residues long: Endoplasmic reticulum membrane sensor NFE2L1 (772 aa).

A helical; Signal-anchor for type II membrane protein membrane pass occupies residues 7–24 (YLTEGLLQFTILLSLIGV). The disordered stretch occupies residues 108–148 (DPEGSVSGSQPNSGLALESSSGLQDVTGPDNGVRESETEQG). Polar residues predominate over residues 113–131 (VSGSQPNSGLALESSSGLQ). Residues 191 to 199 (VFDYSHRQK) form a cholesterol recognition/amino acid consensus (CRAC) region region. Asparagine 348 carries an N-linked (GlcNAc...) asparagine glycan. A CPD region spans residues 379-383 (SPEVE). N-linked (GlcNAc...) asparagine glycosylation is found at asparagine 412 and asparagine 423. Residues 470–532 (EEEFDSDSGL…AVGYSSDSET (63 aa)) form a disordered region. The short motif at 476–480 (DSGLS) is the Destruction motif element. Low complexity predominate over residues 476 to 523 (DSGLSLDSSHSPSSLSSSEGSSSSSSSSSSSSSSASSSASSSFSEEGA). The residue at position 528 (serine 528) is a Phosphoserine; by CK2. Serine 599 bears the Phosphoserine; by PKA mark. The region spanning 654–717 (LIRDIRRRGK…RQMKQKVQSL (64 aa)) is the bZIP domain. The basic motif stretch occupies residues 656 to 675 (RDIRRRGKNKMAAQNCRKRK). The tract at residues 682–696 (LERDVEDLQRDKARL) is leucine-zipper. The disordered stretch occupies residues 753 to 772 (RTMADQQARRQERKPKDRRK). Residues 761 to 768 (RRQERKPK) carry the Nuclear localization signal motif. Residues 763-772 (QERKPKDRRK) show a composition bias toward basic residues.

It belongs to the bZIP family. CNC subfamily. Interacts with KEAP1. As to quaternary structure, interacts (via CPD region) with FBXW7; leading to its ubiquitination and degradation. Interacts with SYVN1/HRD1; leading to its ubiquitination and degradation. Interacts (when ubiquitinated) with DDI2; leading to its cleavage. In terms of assembly, interacts (via the bZIP domain) with small MAF protein (MAFF, MAFG or MAFK); required for binding to antioxidant response elements (AREs) on DNA. Interacts (via Destruction motif) with BTRC; leading to its ubiquitination and degradation. Interacts with CEBPB; the heterodimer represses expression of DSPP during odontoblast differentiation. Interacts with MOTS-c, a peptide produced by the mitochondrially encoded 12S rRNA MT-RNR1. Post-translationally, cleaved at Leu-104 by the aspartyl protease DDI2 following retrotranslocation, releasing the protein from the endoplasmic reticulum membrane and forming the transcription factor NRF1 that translocates into the nucleus. Ubiquitination is prerequisite for cleavage by aspartyl protease DDI2. N-glycosylated in normal conditions, when it has a single-pass type II membrane protein topology, with the DNA-binding domain facing the endoplasmic reticulum lumen. Deglycosylated during retrotranslocation to the cytosolic side of the membrane, to have a single-pass type III membrane protein topology with the major part of the protein facing the cytosol. In terms of processing, ubiquitinated by the SCF(FBXW7) complex and SYVN1/HRD1, leading to its degradation by the proteasome. Ubiquitinated during retrotranslocation to the cytosolic side of the membrane: ubiquitination does not lead to degradation and is required for processing by the aspartyl protease DDI2 and subsequent release from the endoplasmic reticulum membrane. Post-translationally, phosphorylation by CK2 at Ser-528 inhibits transcription factor activity, possibly by affecting DNA-binding activity. Phosphorylation at Ser-599 is required for interaction with CEBPB. Ubiquitinated by the SCF(BTRC) complex in the nucleus, leading to its degradation by the proteasome.

Its subcellular location is the endoplasmic reticulum membrane. The protein resides in the nucleus. Its function is as follows. Endoplasmic reticulum membrane sensor that translocates into the nucleus in response to various stresses to act as a transcription factor. Constitutes a precursor of the transcription factor NRF1. Able to detect various cellular stresses, such as cholesterol excess, oxidative stress or proteasome inhibition. In response to stress, it is released from the endoplasmic reticulum membrane following cleavage by the protease DDI2 and translocates into the nucleus to form the transcription factor NRF1. Acts as a key sensor of cholesterol excess: in excess cholesterol conditions, the endoplasmic reticulum membrane form of the protein directly binds cholesterol via its CRAC motif, preventing cleavage and release of the transcription factor NRF1, thereby allowing expression of genes promoting cholesterol removal, such as CD36. Involved in proteasome homeostasis: in response to proteasome inhibition, it is released from the endoplasmic reticulum membrane, translocates to the nucleus and activates expression of genes encoding proteasome subunits. In terms of biological role, CNC-type bZIP family transcription factor that translocates to the nucleus and regulates expression of target genes in response to various stresses. Heterodimerizes with small-Maf proteins (MAFF, MAFG or MAFK) and binds DNA motifs including the antioxidant response elements (AREs), which regulate expression of genes involved in oxidative stress response. Activates or represses expression of target genes, depending on the context. Plays a key role in cholesterol homeostasis by acting as a sensor of cholesterol excess: in low cholesterol conditions, translocates into the nucleus and represses expression of genes involved in defense against cholesterol excess, such as CD36. In excess cholesterol conditions, the endoplasmic reticulum membrane form of the protein directly binds cholesterol via its CRAC motif, preventing cleavage and release of the transcription factor NRF1, thereby allowing expression of genes promoting cholesterol removal. Critical for redox balance in response to oxidative stress: acts by binding the AREs motifs on promoters and mediating activation of oxidative stress response genes, such as GCLC, GCLM, GSS, MT1 and MT2. Plays an essential role during fetal liver hematopoiesis: probably has a protective function against oxidative stress and is involved in lipid homeostasis in the liver. Involved in proteasome homeostasis: in response to proteasome inhibition, mediates the 'bounce-back' of proteasome subunits by translocating into the nucleus and activating expression of genes encoding proteasome subunits. Also involved in regulating glucose flux. Together with CEBPB; represses expression of DSPP during odontoblast differentiation. In response to ascorbic acid induction, activates expression of SP7/Osterix in osteoblasts. In Pongo abelii (Sumatran orangutan), this protein is Endoplasmic reticulum membrane sensor NFE2L1.